Here is a 770-residue protein sequence, read N- to C-terminus: Serine/threonine-protein kinase PLK4 (770 aa).

Residues 14–267 form the Protein kinase domain; that stretch reads YEVQHLLGKG…LEHVLRHPFL (254 aa). Residues 20-28 and Lys43 each bind ATP; that span reads LGKGGFASV. Catalysis depends on Asp138, which acts as the Proton acceptor. A Cryptic POLO box 1 (CPB1) domain is found at 383 to 500; it reads EERISVPPLN…DRFVGLVKSK (118 aa). Residues 501–604 enclose the Cryptic POLO box 2 (CPB2) domain; sequence TPKVTYFSAL…GRRPVTEVQP (104 aa). The POLO box domain maps to 662–741; that stretch reads PIKRINLPDI…LPHIQLKLKT (80 aa).

Belongs to the protein kinase superfamily. Ser/Thr protein kinase family. CDC5/Polo subfamily. As to quaternary structure, homodimer. Post-translationally, ubiquitinated by the SCF(Slimb) ubiquitin ligase complex; leading to its degradation by the proteasome during interphase and regulating centriole number and ensuring the block to centriole reduplication.

It is found in the cytoplasm. It localises to the cytoskeleton. The protein localises to the microtubule organizing center. The protein resides in the centrosome. Its subcellular location is the centriole. The catalysed reaction is L-seryl-[protein] + ATP = O-phospho-L-seryl-[protein] + ADP + H(+). The enzyme catalyses L-threonyl-[protein] + ATP = O-phospho-L-threonyl-[protein] + ADP + H(+). Serine/threonine-protein kinase that plays a central role in centriole duplication. Able to trigger procentriole formation on the surface of the mother centriole cylinder, using mother centriole as a platform, leading to the recruitment of centriole biogenesis proteins such as sas-6. When overexpressed, it is able to induce centrosome amplification through the simultaneous generation of multiple procentrioles adjoining each parental centriole during S phase. Centrosome amplification following overexpression can initiate tumorigenesis, highlighting the importance of centrosome regulation in cancers. This is Serine/threonine-protein kinase PLK4 (SAK) from Drosophila ananassae (Fruit fly).